Here is a 548-residue protein sequence, read N- to C-terminus: Chaperonin GroEL (548 aa).

Residues Thr30–Pro33, Lys51, Asp87–Thr91, Gly415, Asn479–Ala481, and Asp495 each bind ATP.

The protein belongs to the chaperonin (HSP60) family. Forms a cylinder of 14 subunits composed of two heptameric rings stacked back-to-back. Interacts with the co-chaperonin GroES. Post-translationally, UMPylated on a tyrosine residue by YdiU under ATP-limited conditions.

It is found in the cytoplasm. It catalyses the reaction ATP + H2O + a folded polypeptide = ADP + phosphate + an unfolded polypeptide.. With respect to regulation, UMPylation of the chaperone by YdiU negatively regulates its activity, facilitating Salmonella survival under ATP-limited conditions. Its function is as follows. Together with its co-chaperonin GroES, plays an essential role in assisting protein folding. The GroEL-GroES system forms a nano-cage that allows encapsulation of the non-native substrate proteins and provides a physical environment optimized to promote and accelerate protein folding. The chain is Chaperonin GroEL from Salmonella typhimurium (strain LT2 / SGSC1412 / ATCC 700720).